We begin with the raw amino-acid sequence, 306 residues long: Pantothenate kinase (306 aa).

91–98 serves as a coordination point for ATP; that stretch reads GSVAVGKS.

Belongs to the prokaryotic pantothenate kinase family.

It localises to the cytoplasm. The enzyme catalyses (R)-pantothenate + ATP = (R)-4'-phosphopantothenate + ADP + H(+). Its pathway is cofactor biosynthesis; coenzyme A biosynthesis; CoA from (R)-pantothenate: step 1/5. The sequence is that of Pantothenate kinase from Streptococcus gordonii (strain Challis / ATCC 35105 / BCRC 15272 / CH1 / DL1 / V288).